Consider the following 160-residue polypeptide: Putative lipoprotein YfiB (160 aa).

Positions 1–18 are cleaved as a signal peptide; that stretch reads MIKHLVAPLVFTSLILTG. Cys-19 is lipidated: N-palmitoyl cysteine. Cys-19 is lipidated: S-diacylglycerol cysteine. The 118-residue stretch at 43–160 folds into the OmpA-like domain; sequence AGDWSLGLSD…RRVAVVITTP (118 aa).

Belongs to the outer membrane OOP (TC 1.B.6) superfamily.

Its subcellular location is the cell membrane. The sequence is that of Putative lipoprotein YfiB (yfiB) from Escherichia coli (strain K12).